The chain runs to 182 residues: Putative manganese efflux pump MntP (182 aa).

A run of 6 helical transmembrane segments spans residues 6–26 (LIPLIIMAFALGMDAFSVSLG), 37–57 (ILYIGMTIGIFHIIMPFIGMV), 71–91 (HFAGAILLIGLGFYIVYSTIL), 101–121 (IGISLFVFAFGVSIDSFSVGL), 131–151 (IITILLFGFVSMLLAWIGLLI), and 162–182 (YGEIVGGIILVGFGLYILFPI).

Belongs to the MntP (TC 9.B.29) family.

The protein localises to the cell membrane. Probably functions as a manganese efflux pump. This chain is Putative manganese efflux pump MntP, found in Bacillus cereus (strain G9842).